Reading from the N-terminus, the 2758-residue chain is Highly reducing polyketide synthase NEC1 (2758 aa).

Positions 153 to 492 (EASSPIIGLD…GSNAHVVMDD (340 aa)) constitute a Ketosynthase family 3 (KS3) domain. Residues 512–576 (PRLPGSSSSR…NTDTLQTTDT (65 aa)) are disordered. Low complexity predominate over residues 566-576 (TNTDTLQTTDT). A malonyl-CoA:ACP transacylase (MAT) domain region spans residues 700 to 1044 (VFTGQGAQWP…GYATVLKRGD (345 aa)). The active-site For malonyltransferase activity is the S790. The tract at residues 1124–1255 (HELLGAPVPD…GFVRTEYSQT (132 aa)) is N-terminal hotdog fold. The dehydratase (DH) domain stretch occupies residues 1124 to 1442 (HELLGAPVPD…VFKTIPNTAS (319 aa)). The PKS/mFAS DH domain occupies 1124 to 1443 (HELLGAPVPD…FKTIPNTASS (320 aa)). The active-site Proton acceptor; for dehydratase activity is H1156. Positions 1283–1443 (TSMVHADKVY…FKTIPNTASS (161 aa)) are C-terminal hotdog fold. The active-site Proton donor; for dehydratase activity is D1351. Positions 1622–1727 (LEVGGGTGGA…RKLLKPGGKL (106 aa)) are methyltransferase (CMet) domain. Residues 2031–2344 (GTADVCFSED…LGKGEDAVVL (314 aa)) form an enoyl reductase (ER) domain region. Positions 2372-2553 (ASYMVVGGLG…PVAVSLDLPV (182 aa)) are ketoreductase (KR) domain. One can recognise a Carrier domain in the interval 2673–2750 (EAQAVVLDAL…ALAAAVAGRS (78 aa)). Residue S2710 is modified to O-(pantetheine 4'-phosphoryl)serine.

In terms of biological role, highly reducing polyketide synthase; part of the gene cluster that mediates the biosynthesis of nectriapyrone and its analogs phomopyrone A, acropyrone and zaepyrone. The nectriapyrone biosynthetic gene cluster consists of two genes, the highly reducing polyketide synthase NEC1 that produces a demethylated analog of nectriapyrone from one unit of acetyl-CoA and one unit of malonyl-CoA; and the O-methyltransferase NEC2 that further methylates the NEC1 product to yield nectriapyrone. Nectriapyrone is further hydrolyzed to nectriapyrone D, also known as gulypyrone B, by an unidentified hydrolase localized outside the nectriapyrone cluster. This Pyricularia oryzae (strain 70-15 / ATCC MYA-4617 / FGSC 8958) (Rice blast fungus) protein is Highly reducing polyketide synthase NEC1.